The sequence spans 878 residues: Phosphoenolpyruvate carboxylase (878 aa).

Active-site residues include histidine 140 and lysine 545.

Belongs to the PEPCase type 1 family. Requires Mg(2+) as cofactor.

It carries out the reaction oxaloacetate + phosphate = phosphoenolpyruvate + hydrogencarbonate. Functionally, forms oxaloacetate, a four-carbon dicarboxylic acid source for the tricarboxylic acid cycle. In Ectopseudomonas mendocina (strain ymp) (Pseudomonas mendocina), this protein is Phosphoenolpyruvate carboxylase.